Here is a 131-residue protein sequence, read N- to C-terminus: Protein Turandot M (131 aa).

The first 23 residues, 1–23 (MNPAIYLSCLVVFSLLLLGKVNA), serve as a signal peptide directing secretion.

Belongs to the Turandot family.

It localises to the secreted. A humoral factor that may play a role in stress tolerance. Requires Mekk1 expression in the fat body to regulate response to septic injury and consequent immune response. This chain is Protein Turandot M, found in Drosophila erecta (Fruit fly).